Here is an 85-residue protein sequence, read N- to C-terminus: U4-theraphotoxin-Hhn1j (85 aa).

The N-terminal stretch at 1–22 is a signal peptide; it reads MKVTLIAILTCAAVLVLHTTAA. Positions 23–48 are excised as a propeptide; that stretch reads EELEAESQLMEVGMPDTELAAVDEER. Disulfide bonds link Cys-52-Cys-66, Cys-56-Cys-77, and Cys-71-Cys-82.

It belongs to the neurotoxin 12 (Hwtx-2) family. 02 (Hwtx-2) subfamily. Expressed by the venom gland.

The protein localises to the secreted. In terms of biological role, postsynaptic neurotoxin. This Cyriopagopus hainanus (Chinese bird spider) protein is U4-theraphotoxin-Hhn1j.